The chain runs to 295 residues: Pyridoxal 5'-phosphate synthase subunit PdxS (295 aa).

Residue Asp25 coordinates D-ribose 5-phosphate. The active-site Schiff-base intermediate with D-ribose 5-phosphate is the Lys82. A D-ribose 5-phosphate-binding site is contributed by Gly154. Arg166 is a D-glyceraldehyde 3-phosphate binding site. Residues Gly215 and 236–237 (GS) each bind D-ribose 5-phosphate.

This sequence belongs to the PdxS/SNZ family. In terms of assembly, in the presence of PdxT, forms a dodecamer of heterodimers.

The catalysed reaction is aldehydo-D-ribose 5-phosphate + D-glyceraldehyde 3-phosphate + L-glutamine = pyridoxal 5'-phosphate + L-glutamate + phosphate + 3 H2O + H(+). The protein operates within cofactor biosynthesis; pyridoxal 5'-phosphate biosynthesis. Its function is as follows. Catalyzes the formation of pyridoxal 5'-phosphate from ribose 5-phosphate (RBP), glyceraldehyde 3-phosphate (G3P) and ammonia. The ammonia is provided by the PdxT subunit. Can also use ribulose 5-phosphate and dihydroxyacetone phosphate as substrates, resulting from enzyme-catalyzed isomerization of RBP and G3P, respectively. The sequence is that of Pyridoxal 5'-phosphate synthase subunit PdxS from Actinobacillus pleuropneumoniae serotype 7 (strain AP76).